A 279-amino-acid polypeptide reads, in one-letter code: 3-methyl-2-oxobutanoate hydroxymethyltransferase (279 aa).

Positions 53 and 92 each coordinate Mg(2+). 3-methyl-2-oxobutanoate is bound by residues 53–54, Asp92, and Lys122; that span reads DS. Residue Glu124 coordinates Mg(2+). The Proton acceptor role is filled by Glu191.

The protein belongs to the PanB family. In terms of assembly, homodecamer; pentamer of dimers. Mg(2+) is required as a cofactor.

Its subcellular location is the cytoplasm. The enzyme catalyses 3-methyl-2-oxobutanoate + (6R)-5,10-methylene-5,6,7,8-tetrahydrofolate + H2O = 2-dehydropantoate + (6S)-5,6,7,8-tetrahydrofolate. It participates in cofactor biosynthesis; (R)-pantothenate biosynthesis; (R)-pantoate from 3-methyl-2-oxobutanoate: step 1/2. In terms of biological role, catalyzes the reversible reaction in which hydroxymethyl group from 5,10-methylenetetrahydrofolate is transferred onto alpha-ketoisovalerate to form ketopantoate. The sequence is that of 3-methyl-2-oxobutanoate hydroxymethyltransferase from Maricaulis maris (strain MCS10) (Caulobacter maris).